The following is a 575-amino-acid chain: Sorting nexin-41 (575 aa).

Positions 30–66 are disordered; the sequence is TDGPDDYDFTEPSINGSSDENAQSNAVAEPIEETDEP. The segment covering 41–55 has biased composition (polar residues); sequence PSINGSSDENAQSNA. The 121-residue stretch at 101–221 folds into the PX domain; the sequence is QGKNPEVIRI…QKFLNPEYFW (121 aa). A 1,2-diacyl-sn-glycero-3-phospho-(1D-myo-inositol-3-phosphate)-binding residues include R139, S141, K165, and R188. A disordered region spans residues 467–486; sequence FRSSASPNNKSGSDSISSEV. Positions 469–484 are enriched in polar residues; that stretch reads SSASPNNKSGSDSISS.

It belongs to the sorting nexin family.

The protein localises to the endosome membrane. It is found in the endomembrane system. Its function is as follows. May be required for cytoplasm to vacuole transport (Cvt) and pexophagy. This Kluyveromyces lactis (strain ATCC 8585 / CBS 2359 / DSM 70799 / NBRC 1267 / NRRL Y-1140 / WM37) (Yeast) protein is Sorting nexin-41 (SNX41).